We begin with the raw amino-acid sequence, 792 residues long: Probable exo-1,4-beta-xylosidase xlnD (792 aa).

An N-terminal signal peptide occupies residues 1–20 (MSAIKSIATVLAAILPSVLA). Asparagine 23, asparagine 87, asparagine 142, and asparagine 246 each carry an N-linked (GlcNAc...) asparagine glycan. The active site involves aspartate 310. 10 N-linked (GlcNAc...) asparagine glycosylation sites follow: asparagine 326, asparagine 385, asparagine 391, asparagine 404, asparagine 438, asparagine 475, asparagine 479, asparagine 516, asparagine 677, and asparagine 699.

Belongs to the glycosyl hydrolase 3 family.

The protein localises to the secreted. It carries out the reaction Hydrolysis of (1-&gt;4)-beta-D-xylans, to remove successive D-xylose residues from the non-reducing termini.. It participates in glycan degradation; xylan degradation. Its function is as follows. Xylan 1,4-beta-xylosidase involved in the hydrolysis of xylan, a major structural heterogeneous polysaccharide found in plant biomass representing the second most abundant polysaccharide in the biosphere, after cellulose. The polypeptide is Probable exo-1,4-beta-xylosidase xlnD (xlnD) (Aspergillus clavatus (strain ATCC 1007 / CBS 513.65 / DSM 816 / NCTC 3887 / NRRL 1 / QM 1276 / 107)).